Reading from the N-terminus, the 393-residue chain is Cytotoxic and regulatory T-cell molecule (393 aa).

The N-terminal stretch at 1-17 (MWWRVLSLLAWFPLQEA) is a signal peptide. Residues 18-114 (SLTNHTETIT…VSTKEVKVIV (97 aa)) enclose the Ig-like V-type domain. Over 18–287 (SLTNHTETIT…YLGLARKKSG (270 aa)) the chain is Extracellular. N-linked (GlcNAc...) asparagine glycans are attached at residues asparagine 21, asparagine 87, and asparagine 178. 2 cysteine pairs are disulfide-bonded: cysteine 38–cysteine 98 and cysteine 141–cysteine 196. The 93-residue stretch at 118 to 210 (PFKPILEASV…RGLQGRKLVA (93 aa)) folds into the Ig-like C2-type domain. Residues 225–273 (SDALERNSLSSQDPQQPTSTVSVTEDSSTSEIDKEEKEQTTQDPDLTTE) form a disordered region. Residues 231–241 (NSLSSQDPQQP) show a composition bias toward polar residues. The span at 242-254 (TSTVSVTEDSSTS) shows a compositional bias: low complexity. Residues 255–264 (EIDKEEKEQT) are compositionally biased toward basic and acidic residues. The helical transmembrane segment at 288 to 308 (ILLLTLVSFLIFILFIIVQLF) threads the bilayer. The Cytoplasmic segment spans residues 309-393 (IMKLRKAHVI…KHIQVPESIV (85 aa)). Basic and acidic residues-rich tracts occupy residues 328–348 (HTLESYRSRSNNEETSSEEKN) and 374–387 (ENVQHSKLEEKHIQ). Disordered regions lie at residues 328 to 354 (HTLESYRSRSNNEETSSEEKNGQSSHP) and 374 to 393 (ENVQHSKLEEKHIQVPESIV). Residues 390–393 (ESIV) carry the PDZ-binding motif.

This sequence belongs to the nectin family. In terms of assembly, monomer. May form homodimer (via Ig-like V-type domain). Interacts (via Ig-like V-type domain) with CADM1 (via Ig-like V-type domain); the interaction competes with CRTAM homodimerization and CADM1 homodimerization. Interacts (via PDZ-binding motif) with SCRIB (via PDZ domain 3); the interaction promotes CRTAM and SCRIB polarization in a subset of CD4+ T-cells. In terms of tissue distribution, in the immune system, expression is restricted to activated class-I MHC-restricted cells, including NKT and CD8 T-cells. Strongly expressed in spleen, thymus, small intestine, peripheral blood leukocyte, and in Purkinje neurons in cerebellum. Expressed at much lower levels in testis, ovary, colon, lung and lymphoid tissues.

The protein localises to the cell membrane. Functionally, mediates heterophilic cell-cell adhesion which regulates the activation, differentiation and tissue retention of various T-cell subsets. Interaction with CADM1 promotes natural killer (NK) cell cytotoxicity and IFNG/interferon-gamma secretion by CD8+ T-cells in vitro as well as NK cell-mediated rejection of tumors expressing CADM1 in vivo. Regulates CD8+ T-cell proliferation in response to T-cell receptor (TCR) activation. Appears to be dispensable for CD8+ T-cell-mediated cytotoxicity. Interaction with SCRIB promotes the late phase of cellular polarization of a subset of CD4+ T-cells, which in turn regulates TCR-mediated proliferation and IFNG, IL17 and IL22 production. By interacting with CADM1 on CD8+ dendritic cells, regulates the retention of activated CD8+ T-cells within the draining lymph node. Required for the intestinal retention of intraepithelial CD4+ CD8+ T-cells and, to a lesser extent, intraepithelial and lamina propria CD8+ T-cells and CD4+ T-cells. Interaction with CADM1 promotes the adhesion to gut-associated CD103+ dendritic cells, which may facilitate the expression of gut-homing and adhesion molecules on T-cells and the conversion of CD4+ T-cells into CD4+ CD8+ T-cells. This Homo sapiens (Human) protein is Cytotoxic and regulatory T-cell molecule.